The sequence spans 73 residues: Translation initiation factor IF-1 1 (73 aa).

The region spanning 1 to 72 (MAKEELIEFG…TKGRINFRHK (72 aa)) is the S1-like domain.

This sequence belongs to the IF-1 family. In terms of assembly, component of the 30S ribosomal translation pre-initiation complex which assembles on the 30S ribosome in the order IF-2 and IF-3, IF-1 and N-formylmethionyl-tRNA(fMet); mRNA recruitment can occur at any time during PIC assembly.

It localises to the cytoplasm. Its function is as follows. One of the essential components for the initiation of protein synthesis. Stabilizes the binding of IF-2 and IF-3 on the 30S subunit to which N-formylmethionyl-tRNA(fMet) subsequently binds. Helps modulate mRNA selection, yielding the 30S pre-initiation complex (PIC). Upon addition of the 50S ribosomal subunit IF-1, IF-2 and IF-3 are released leaving the mature 70S translation initiation complex. The sequence is that of Translation initiation factor IF-1 1 from Cupriavidus metallidurans (strain ATCC 43123 / DSM 2839 / NBRC 102507 / CH34) (Ralstonia metallidurans).